We begin with the raw amino-acid sequence, 462 residues long: tRNA(Ile2) 2-agmatinylcytidine synthetase TiaS (462 aa).

It belongs to the TiaS family.

It localises to the cytoplasm. The catalysed reaction is cytidine(34) in tRNA(Ile2) + agmatine + ATP + H2O = 2-agmatinylcytidine(34) in tRNA(Ile2) + AMP + 2 phosphate + 2 H(+). In terms of biological role, ATP-dependent agmatine transferase that catalyzes the formation of 2-agmatinylcytidine (agm2C) at the wobble position (C34) of tRNA(Ile2), converting the codon specificity from AUG to AUA. This is tRNA(Ile2) 2-agmatinylcytidine synthetase TiaS from Haloquadratum walsbyi (strain DSM 16790 / HBSQ001).